We begin with the raw amino-acid sequence, 283 residues long: Phosphatidylglycerol--prolipoprotein diacylglyceryl transferase (283 aa).

3 helical membrane passes run 17-37, 56-76, and 88-108; these read LAVRWYALSYILGFILFTFLG, FLTWGILGVILGGRLGYVLFY, and IFKVWEGGMSFHGGFLGVVIA. A 1,2-diacyl-sn-glycero-3-phospho-(1'-sn-glycerol) is bound at residue arginine 139. 2 helical membrane passes run 222–242 and 255–275; these read GQVASLFLGGYGIFRFIAEFA and GLSMGQWLSVPMIVLGIVGFV.

This sequence belongs to the Lgt family.

It is found in the cell inner membrane. The catalysed reaction is L-cysteinyl-[prolipoprotein] + a 1,2-diacyl-sn-glycero-3-phospho-(1'-sn-glycerol) = an S-1,2-diacyl-sn-glyceryl-L-cysteinyl-[prolipoprotein] + sn-glycerol 1-phosphate + H(+). Its pathway is protein modification; lipoprotein biosynthesis (diacylglyceryl transfer). Functionally, catalyzes the transfer of the diacylglyceryl group from phosphatidylglycerol to the sulfhydryl group of the N-terminal cysteine of a prolipoprotein, the first step in the formation of mature lipoproteins. In Neisseria meningitidis serogroup B (strain ATCC BAA-335 / MC58), this protein is Phosphatidylglycerol--prolipoprotein diacylglyceryl transferase.